The chain runs to 328 residues: Malate dehydrogenase (328 aa).

11–17 (GAAGQIG) provides a ligand contact to NAD(+). Substrate-binding residues include arginine 94 and arginine 100. Residues asparagine 107, glutamine 114, and 131 to 133 (VGN) contribute to the NAD(+) site. Residues asparagine 133 and arginine 164 each coordinate substrate. Histidine 189 (proton acceptor) is an active-site residue.

The protein belongs to the LDH/MDH superfamily. MDH type 2 family.

The enzyme catalyses (S)-malate + NAD(+) = oxaloacetate + NADH + H(+). Catalyzes the reversible oxidation of malate to oxaloacetate. The polypeptide is Malate dehydrogenase (Xanthomonas campestris pv. campestris (strain B100)).